Here is a 158-residue protein sequence, read N- to C-terminus: Large ribosomal subunit protein mL50 (158 aa).

Belongs to the mitochondrion-specific ribosomal protein mL50 family. As to quaternary structure, component of the mitochondrial ribosome large subunit (39S) which comprises a 16S rRNA and about 50 distinct proteins.

The protein localises to the mitochondrion. In Pongo abelii (Sumatran orangutan), this protein is Large ribosomal subunit protein mL50 (MRPL50).